Reading from the N-terminus, the 230-residue chain is uncharacterized protein (230 aa).

The region spanning Lys-12–Gln-80 is the HTH gntR-type domain. The H-T-H motif DNA-binding region spans Glu-40–Lys-59.

This is an uncharacterized protein from Escherichia coli (strain K12).